Reading from the N-terminus, the 644-residue chain is MVEGWRNGFRDATNSKPLFVTIYATVIIGVLVSSFYVFSAIYSPTNGSSSFLSFPPLSTSGRIHSLPQENATLELPVAPPPPPQALPPPVLEEAQGNSLGKIWVSPPRDKKMPPLETFKLTKELFGERVKDNVIIVTFGNYAFMDFILTWVKHLTDLDLSNILVGAMDTKLLEALYWKGVPVFDMGSHMSTVDVGWGSPTFHKMGREKVILIDSVLPFGYELLMCDTDMVWLKNPMPYLARFPDADVLTSSDQVVPTVIDDSLDIWQQVGAAYNIGIFHWRPTESAKKLAKEWKEILLADDKVWDQNGFNEIVRRQLGPSVEGDSGLFYAYDGNLKVGILPASIFCSGHTYFVQAMYQQLRLEPYAVHTTFQYAGTEGKRHRLREGMVFYDPPEYYDSPGGFIAFKPSIPKSLLLDGKHTIESHFILVNHQMKQIRSALAIASLLNRTLVMPPIWCRLDRLWFGHPGTLQGSMTRQPFICPLDHVFEVNIMLKELPEEEFGPGIGIREYSFLDNPLLPKQVKESWLDVQLCQEGKEGCEASNNTSPSRVLKFPKRSNEDTFKAIFSSFDDVKVIKFSSIEDAFIGFSDKEREERFRRRVKRYVGIWCCEENKTPGHIYYDMYWDEKPGWKPVPPQTPEEDHPPL.

Residues 1-17 are Cytoplasmic-facing; the sequence is MVEGWRNGFRDATNSKP. A helical; Signal-anchor for type II membrane protein membrane pass occupies residues 18 to 38; it reads LFVTIYATVIIGVLVSSFYVF. Residues 39 to 644 are Lumenal-facing; sequence SAIYSPTNGS…QTPEEDHPPL (606 aa). Asparagine 46 and asparagine 70 each carry an N-linked (GlcNAc...) asparagine glycan. The DXD motif signature appears at 226-228; it reads DTD. Asparagine 446 and asparagine 542 each carry an N-linked (GlcNAc...) asparagine glycan.

This sequence belongs to the glycosyltransferase 77 family.

Its subcellular location is the golgi apparatus membrane. Plays a role in the arabinosylation of cell wall components. Involved in the arabinosylation of extensin proteins in root hair cells. Extensins are structural glycoproteins present in cell walls and its arabinosylation is important for cell elongation, root hair cell development, lateral root development and root hair tip growth. This is Arabinosyltransferase XEG113 from Arabidopsis thaliana (Mouse-ear cress).